A 444-amino-acid polypeptide reads, in one-letter code: Serine--tRNA ligase (444 aa).

248-250 (TSE) contributes to the L-serine binding site. Residue 279–281 (RSE) coordinates ATP. E302 provides a ligand contact to L-serine. Position 366–369 (366–369 (EISS)) interacts with ATP. S401 is an L-serine binding site.

This sequence belongs to the class-II aminoacyl-tRNA synthetase family. Type-1 seryl-tRNA synthetase subfamily. In terms of assembly, homodimer. The tRNA molecule binds across the dimer.

It localises to the cytoplasm. It catalyses the reaction tRNA(Ser) + L-serine + ATP = L-seryl-tRNA(Ser) + AMP + diphosphate + H(+). The enzyme catalyses tRNA(Sec) + L-serine + ATP = L-seryl-tRNA(Sec) + AMP + diphosphate + H(+). It functions in the pathway aminoacyl-tRNA biosynthesis; selenocysteinyl-tRNA(Sec) biosynthesis; L-seryl-tRNA(Sec) from L-serine and tRNA(Sec): step 1/1. Functionally, catalyzes the attachment of serine to tRNA(Ser). Is also able to aminoacylate tRNA(Sec) with serine, to form the misacylated tRNA L-seryl-tRNA(Sec), which will be further converted into selenocysteinyl-tRNA(Sec). The polypeptide is Serine--tRNA ligase (Polaromonas naphthalenivorans (strain CJ2)).